We begin with the raw amino-acid sequence, 466 residues long: ATP synthase subunit beta, sodium ion specific (466 aa).

153-160 (GGAGVGKT) contacts ATP.

It belongs to the ATPase alpha/beta chains family. F-type ATPases have 2 components, CF(1) - the catalytic core - and CF(0) - the membrane proton channel. CF(1) has five subunits: alpha(3), beta(3), gamma(1), delta(1), epsilon(1). CF(0) has three main subunits: a, b and c.

The protein resides in the cell membrane. The catalysed reaction is 4 Na(+)(in) + ATP + H2O = 4 Na(+)(out) + ADP + phosphate + H(+). With respect to regulation, inhibited by nitrate. Its function is as follows. Produces ATP from ADP in the presence of a sodium ion gradient across the membrane. The beta chain is the catalytic subunit. The sequence is that of ATP synthase subunit beta, sodium ion specific from Acetobacterium woodii (strain ATCC 29683 / DSM 1030 / JCM 2381 / KCTC 1655 / WB1).